A 242-amino-acid chain; its full sequence is Phosphatidylethanolamine-binding protein 4 (242 aa).

The first 26 residues, 1-26 (MTMKLVAAALCLSLLAAGLWVGLSLT), serve as a signal peptide directing secretion. Residues 31 to 50 (EEGKPGGEKPGGGKPGGSGR) are disordered. Residues 38–50 (EKPGGGKPGGSGR) show a composition bias toward gly residues. Residues asparagine 77 and asparagine 139 are each glycosylated (N-linked (GlcNAc...) asparagine). The segment at 210–242 (DPDTSTQFMTQFDEELSSEFGRINDDQEQFNQK) is important for secretion.

It belongs to the phosphatidylethanolamine-binding protein family.

It is found in the secreted. Functionally, promotes AKT phosphorylation, suggesting a possible role in the PI3K-AKT signaling pathway. This is Phosphatidylethanolamine-binding protein 4 (Pebp4) from Mus musculus (Mouse).